A 904-amino-acid polypeptide reads, in one-letter code: Pentatricopeptide repeat-containing protein At4g30825, chloroplastic (904 aa).

Residues 1 to 61 constitute a chloroplast transit peptide; that stretch reads MGSLRFSIPL…SSTRVLDKIR (61 aa). The tract at residues 75 to 94 is disordered; the sequence is NSASAAPVERSRSSKLSGDQ. 20 PPR repeats span residues 173–203, 209–243, 244–274, 278–312, 313–347, 348–382, 383–417, 418–452, 487–521, 522–553, 557–591, 592–622, 628–662, 663–697, 698–732, 733–766, 767–801, 802–836, 837–871, and 872–904; these read NFVA…LCGF, SYQV…GVRP, NVAT…MRKF, CESA…RVRL, KLEN…GFSP, NIIA…GLEP, DETS…GYKP, NSFN…GCQY, NQTS…DSAF, ESHL…MESD, NLHI…GVVL, DRIG…MDEQ, DVYL…GIHW, NQEM…GFTP, NTVT…GVVD, VISY…GFSV, SLEA…TSGP, DHYT…GLGP, DLCS…NIIP, and DKVT…QMGI.

Belongs to the PPR family. P subfamily.

It is found in the plastid. The protein resides in the chloroplast. This chain is Pentatricopeptide repeat-containing protein At4g30825, chloroplastic, found in Arabidopsis thaliana (Mouse-ear cress).